The primary structure comprises 670 residues: Glycine--tRNA ligase beta subunit (670 aa).

It belongs to the class-II aminoacyl-tRNA synthetase family. Tetramer of two alpha and two beta subunits.

The protein resides in the cytoplasm. It carries out the reaction tRNA(Gly) + glycine + ATP = glycyl-tRNA(Gly) + AMP + diphosphate. This Thermotoga neapolitana (strain ATCC 49049 / DSM 4359 / NBRC 107923 / NS-E) protein is Glycine--tRNA ligase beta subunit.